Consider the following 706-residue polypeptide: DNA ligase (706 aa).

Residues 1–20 are disordered; that stretch reads MSATAGTADESGVASAAASA. NAD(+) is bound by residues 50–54, 99–100, and Glu128; these read DAEYD and SL. Lys130 functions as the N6-AMP-lysine intermediate in the catalytic mechanism. NAD(+) is bound by residues Arg151, Glu188, Lys304, and Lys328. Zn(2+) is bound by residues Cys422, Cys425, Cys440, and Cys446. The BRCT domain occupies 604–694; the sequence is EGPRPLDGVT…VDAASKLAVP (91 aa).

It belongs to the NAD-dependent DNA ligase family. LigA subfamily. Mg(2+) serves as cofactor. It depends on Mn(2+) as a cofactor.

The catalysed reaction is NAD(+) + (deoxyribonucleotide)n-3'-hydroxyl + 5'-phospho-(deoxyribonucleotide)m = (deoxyribonucleotide)n+m + AMP + beta-nicotinamide D-nucleotide.. DNA ligase that catalyzes the formation of phosphodiester linkages between 5'-phosphoryl and 3'-hydroxyl groups in double-stranded DNA using NAD as a coenzyme and as the energy source for the reaction. It is essential for DNA replication and repair of damaged DNA. This chain is DNA ligase, found in Frankia casuarinae (strain DSM 45818 / CECT 9043 / HFP020203 / CcI3).